The sequence spans 101 residues: NAD(P)H-quinone oxidoreductase subunit 4L, chloroplastic (101 aa).

3 helical membrane passes run 2 to 22, 32 to 52, and 61 to 81; these read MLEHVLVLSAYLFSFVLYGLI, MCLELILNAVNLNFVTFSDFF, and IFSIFVIAIAAAEAAIGLAIV.

Belongs to the complex I subunit 4L family. NDH is composed of at least 16 different subunits, 5 of which are encoded in the nucleus.

The protein localises to the plastid. It is found in the chloroplast thylakoid membrane. It catalyses the reaction a plastoquinone + NADH + (n+1) H(+)(in) = a plastoquinol + NAD(+) + n H(+)(out). It carries out the reaction a plastoquinone + NADPH + (n+1) H(+)(in) = a plastoquinol + NADP(+) + n H(+)(out). Its function is as follows. NDH shuttles electrons from NAD(P)H:plastoquinone, via FMN and iron-sulfur (Fe-S) centers, to quinones in the photosynthetic chain and possibly in a chloroplast respiratory chain. The immediate electron acceptor for the enzyme in this species is believed to be plastoquinone. Couples the redox reaction to proton translocation, and thus conserves the redox energy in a proton gradient. The chain is NAD(P)H-quinone oxidoreductase subunit 4L, chloroplastic from Guizotia abyssinica (Niger).